Reading from the N-terminus, the 376-residue chain is Glutamate 5-kinase (376 aa).

ATP is bound at residue Lys-23. Substrate-binding residues include Ser-63, Asp-150, and Asn-162. ATP contacts are provided by residues 182–183 and 222–228; these read SD and TGGMASK. The region spanning 284–358 is the PUA domain; that stretch reads GGALRIDAGA…GKQTAQLPEG (75 aa).

Belongs to the glutamate 5-kinase family.

Its subcellular location is the cytoplasm. The catalysed reaction is L-glutamate + ATP = L-glutamyl 5-phosphate + ADP. It functions in the pathway amino-acid biosynthesis; L-proline biosynthesis; L-glutamate 5-semialdehyde from L-glutamate: step 1/2. In terms of biological role, catalyzes the transfer of a phosphate group to glutamate to form L-glutamate 5-phosphate. The protein is Glutamate 5-kinase of Corynebacterium diphtheriae (strain ATCC 700971 / NCTC 13129 / Biotype gravis).